Here is an 839-residue protein sequence, read N- to C-terminus: Katanin p80 WD40 repeat-containing subunit B1 homolog KTN80.3 (839 aa).

7 WD repeats span residues 14–54 (AHSA…AILS), 57–96 (GHSS…VVRT), 99–138 (GHRS…CIHT), 141–182 (GHTR…HEFK), 184–222 (HEGK…LIGS), 225–265 (TETT…DGVD), and 267–304 (GWSN…TEPM). The DWD box signature appears at 115 to 131 (FFASGSLDTNLKIWDIR). 4 disordered regions span residues 303 to 340 (PMSG…LGKL), 357 to 435 (GKLS…KSAS), 501 to 561 (LQSK…RTNK), and 575 to 648 (SLVR…PSNM). Composition is skewed to polar residues over residues 307-334 (GATQ…NSSK), 375-385 (TGRSSVSQSSD), 411-435 (TLSS…KSAS), 501-533 (LQSK…QSQP), 589-602 (DLIS…SSPT), and 630-648 (VSSS…PSNM).

The protein belongs to the WD repeat KATNB1 family. Component of KTN80-KTN1 complexes composed of a hexamer of KTN1-KTN80 heterodimers that sense microtubule (MT) geometry to confer precise MT severing. Interacts directly with AAA1/KTN1 and KTN80.1, and weakly with KTN80.4. Expressed in siliques, flowers, leaves, stems and roots.

It is found in the cytoplasm. Its subcellular location is the cytoskeleton. Its function is as follows. May participate in a complex which severs microtubules in an ATP-dependent manner. Microtubule severing may promote rapid reorganization of cellular microtubule arrays. Confers precision to microtubule (MT) severing by specific targeting of KTN1 to MT cleavage sites such as crossover or branching nucleation sites. Together with other KTN80s, regulates cell elongation by modulating MT organization. The chain is Katanin p80 WD40 repeat-containing subunit B1 homolog KTN80.3 from Arabidopsis thaliana (Mouse-ear cress).